A 176-amino-acid chain; its full sequence is Probable Brix domain-containing ribosomal biogenesis protein (176 aa).

The Brix domain maps to 6–176 (IEIVFTSSRD…QLYDRNKNIN (171 aa)).

Its function is as follows. Probably involved in the biogenesis of the ribosome. This is Probable Brix domain-containing ribosomal biogenesis protein from Sulfurisphaera tokodaii (strain DSM 16993 / JCM 10545 / NBRC 100140 / 7) (Sulfolobus tokodaii).